A 352-amino-acid chain; its full sequence is Uroporphyrinogen decarboxylase (352 aa).

Substrate-binding positions include 26 to 30 (RQAGR), D76, Y153, S208, and H323.

This sequence belongs to the uroporphyrinogen decarboxylase family. In terms of assembly, homodimer.

The protein localises to the cytoplasm. It carries out the reaction uroporphyrinogen III + 4 H(+) = coproporphyrinogen III + 4 CO2. It functions in the pathway porphyrin-containing compound metabolism; protoporphyrin-IX biosynthesis; coproporphyrinogen-III from 5-aminolevulinate: step 4/4. Functionally, catalyzes the decarboxylation of four acetate groups of uroporphyrinogen-III to yield coproporphyrinogen-III. This Synechococcus sp. (strain CC9902) protein is Uroporphyrinogen decarboxylase.